Here is a 677-residue protein sequence, read N- to C-terminus: Methionine--tRNA ligase (677 aa).

The 'HIGH' region motif lies at 15–25; sequence PYANGPIHIGH. The Zn(2+) site is built by cysteine 146, cysteine 149, cysteine 159, and cysteine 162. Residues 332 to 336 carry the 'KMSKS' region motif; the sequence is KMSKS. Lysine 335 is an ATP binding site. The tRNA-binding domain maps to 576–677; the sequence is DFAKVDLRVA…DGAKPGMRIM (102 aa).

It belongs to the class-I aminoacyl-tRNA synthetase family. MetG type 1 subfamily. Homodimer. The cofactor is Zn(2+).

It localises to the cytoplasm. The catalysed reaction is tRNA(Met) + L-methionine + ATP = L-methionyl-tRNA(Met) + AMP + diphosphate. Functionally, is required not only for elongation of protein synthesis but also for the initiation of all mRNA translation through initiator tRNA(fMet) aminoacylation. The sequence is that of Methionine--tRNA ligase from Idiomarina loihiensis (strain ATCC BAA-735 / DSM 15497 / L2-TR).